The following is a 383-amino-acid chain: Meiotic recombination protein SPO11-2 (383 aa).

Residues leucine 24–leucine 167 enclose the Topo IIA-type catalytic domain. Tyrosine 124 (O-(5'-phospho-DNA)-tyrosine intermediate) is an active-site residue. Residues glutamate 217 and aspartate 270 each coordinate Mg(2+).

Belongs to the TOP6A family. Heterotetramer of 2 SPO11 (SPO11-1 and/or SPO11-2) and 2 MTOPVIB chains. Interacts with MTOPVIB. May form a heterodimer with SPO11-1. Interacts with PRD1. Does not interact with TOP6B. Mg(2+) is required as a cofactor. Very low expression in flowers and shoots.

The protein localises to the nucleus. The catalysed reaction is ATP-dependent breakage, passage and rejoining of double-stranded DNA.. Its function is as follows. Component of a topoisomerase 6 complex specifically required for meiotic recombination. Together with MTOPVIB, mediates DNA cleavage that forms the double-strand breaks (DSB) that initiate meiotic recombination. The complex promotes relaxation of negative and positive supercoiled DNA and DNA decatenation through cleavage and ligation cycles. The chain is Meiotic recombination protein SPO11-2 (SPO11-2) from Arabidopsis thaliana (Mouse-ear cress).